The chain runs to 396 residues: Smad nuclear-interacting protein 1 (396 aa).

Positions 1-10 are enriched in basic and acidic residues; the sequence is MKAVKSERER. Residues 1–227 are disordered; that stretch reads MKAVKSERER…VPAKEKPSFE (227 aa). Lysine 30 participates in a covalent cross-link: Glycyl lysine isopeptide (Lys-Gly) (interchain with G-Cter in SUMO); alternate. Lysine 30 is covalently cross-linked (Glycyl lysine isopeptide (Lys-Gly) (interchain with G-Cter in SUMO1); alternate). Lysine 30 participates in a covalent cross-link: Glycyl lysine isopeptide (Lys-Gly) (interchain with G-Cter in SUMO2); alternate. 4 positions are modified to phosphoserine: serine 35, serine 49, serine 52, and serine 54. Phosphothreonine is present on threonine 57. A phosphoserine mark is found at serine 58 and serine 99. Basic residues predominate over residues 77 to 105; that stretch reads PPKKKNKASGRRSKSPRSKRNRSPHHSTV. Basic and acidic residues predominate over residues 107–142; it reads VKQEREDHPRRGREDRQHREPSEQEHRRARNSDRDR. Residue lysine 108 forms a Glycyl lysine isopeptide (Lys-Gly) (interchain with G-Cter in SUMO2) linkage. Serine 153 is subject to Phosphoserine. Positions 165-196 form a coiled coil; the sequence is RDRDTQNLQAQEEEREFYNARRREHRQRNDVG. At serine 202 the chain carries Phosphoserine. A compositionally biased stretch (basic and acidic residues) spans 213–225; sequence NKEKEVPAKEKPS. Lysine 223 participates in a covalent cross-link: Glycyl lysine isopeptide (Lys-Gly) (interchain with G-Cter in SUMO2). The FHA domain maps to 281-344; that stretch reads YLLGRHRRIA…NGTFLNNKRI (64 aa). Residues 373 to 382 are compositionally biased toward basic and acidic residues; it reads SSDTSEIDRK. Residues 373–396 form a disordered region; it reads SSDTSEIDRKDDEDEEEEEEVSDS. Acidic residues predominate over residues 383–396; the sequence is DDEDEEEEEEVSDS. Serine 394 carries the phosphoserine modification.

As to quaternary structure, component of activated spliceosome complexes. Component of the minor spliceosome, which splices U12-type introns. Binds SMAD4 and CREBBP/EP300. Binds the SMAD1/OAZ1/PSMB4 complex. Interacts with DROSHA and SMARCA4. Component of the SNARP complex which consists at least of SNIP1, SNW1, THRAP3, BCLAF1 and PNN. Degraded by the proteasome upon binding to the SMAD1/OAZ1/PSMB4 complex. In terms of tissue distribution, ubiquitous, with highest expression in heart and skeletal muscle.

Its subcellular location is the nucleus. Functionally, required for pre-mRNA splicing as component of the spliceosome. As a component of the minor spliceosome, involved in the splicing of U12-type introns in pre-mRNAs. Down-regulates NF-kappa-B signaling by competing with RELA for CREBBP/EP300 binding. Involved in the microRNA (miRNA) biogenesis. May be involved in cyclin-D1/CCND1 mRNA stability through the SNARP complex which associates with both the 3'end of the CCND1 gene and its mRNA. In Homo sapiens (Human), this protein is Smad nuclear-interacting protein 1 (SNIP1).